A 626-amino-acid chain; its full sequence is Glutamine--fructose-6-phosphate aminotransferase [isomerizing] (626 aa).

Catalysis depends on Cys2, which acts as the Nucleophile; for GATase activity. The 221-residue stretch at 2–222 (CGIVGYIGPQ…NGELARLTPT (221 aa)) folds into the Glutamine amidotransferase type-2 domain. SIS domains are found at residues 293–441 (LPPS…QRQS) and 471–616 (YIEA…VDQP). The For Fru-6P isomerization activity role is filled by Lys621.

As to quaternary structure, homodimer.

The protein localises to the cytoplasm. It carries out the reaction D-fructose 6-phosphate + L-glutamine = D-glucosamine 6-phosphate + L-glutamate. In terms of biological role, catalyzes the first step in hexosamine metabolism, converting fructose-6P into glucosamine-6P using glutamine as a nitrogen source. The sequence is that of Glutamine--fructose-6-phosphate aminotransferase [isomerizing] from Thermosynechococcus vestitus (strain NIES-2133 / IAM M-273 / BP-1).